Reading from the N-terminus, the 886-residue chain is Coatomer subunit gamma (886 aa).

HEAT repeat units lie at residues 66–103 (VEAT…SSDE), 288–325 (RELT…THPM), 327–359 (VTNC…TGNE), 360–397 (SSVE…KFPL), and 472–509 (SDPS…MVES). The interval 592 to 613 (SQPLAEKKAQGKKPTGLGAPPA) is disordered.

The protein belongs to the COPG family. As to quaternary structure, oligomeric complex that consists of at least the alpha, beta, beta', gamma, delta, epsilon and zeta subunits.

It is found in the cytoplasm. It localises to the golgi apparatus membrane. The protein localises to the cytoplasmic vesicle. The protein resides in the COPI-coated vesicle membrane. In terms of biological role, the coatomer is a cytosolic protein complex that binds to dilysine motifs and reversibly associates with Golgi non-clathrin-coated vesicles, which further mediate biosynthetic protein transport from the ER, via the Golgi up to the trans Golgi network. Coatomer complex is required for budding from Golgi membranes, and is essential for the retrograde Golgi-to-ER transport of dilysine-tagged proteins. The polypeptide is Coatomer subunit gamma (Arabidopsis thaliana (Mouse-ear cress)).